Consider the following 481-residue polypeptide: Glutamyl-tRNA(Gln) amidotransferase subunit A (481 aa).

Catalysis depends on charge relay system residues Lys74 and Ser149. Catalysis depends on Ser173, which acts as the Acyl-ester intermediate.

The protein belongs to the amidase family. GatA subfamily. In terms of assembly, heterotrimer of A, B and C subunits.

The catalysed reaction is L-glutamyl-tRNA(Gln) + L-glutamine + ATP + H2O = L-glutaminyl-tRNA(Gln) + L-glutamate + ADP + phosphate + H(+). Allows the formation of correctly charged Gln-tRNA(Gln) through the transamidation of misacylated Glu-tRNA(Gln) in organisms which lack glutaminyl-tRNA synthetase. The reaction takes place in the presence of glutamine and ATP through an activated gamma-phospho-Glu-tRNA(Gln). This Francisella tularensis subsp. novicida (strain U112) protein is Glutamyl-tRNA(Gln) amidotransferase subunit A.